We begin with the raw amino-acid sequence, 271 residues long: Thiazole synthase (271 aa).

K104 acts as the Schiff-base intermediate with DXP in catalysis. Residues G165, 192–193 (AG), and 214–215 (NT) each bind 1-deoxy-D-xylulose 5-phosphate.

This sequence belongs to the ThiG family. As to quaternary structure, homotetramer. Forms heterodimers with either ThiH or ThiS.

The protein resides in the cytoplasm. It carries out the reaction [ThiS sulfur-carrier protein]-C-terminal-Gly-aminoethanethioate + 2-iminoacetate + 1-deoxy-D-xylulose 5-phosphate = [ThiS sulfur-carrier protein]-C-terminal Gly-Gly + 2-[(2R,5Z)-2-carboxy-4-methylthiazol-5(2H)-ylidene]ethyl phosphate + 2 H2O + H(+). It participates in cofactor biosynthesis; thiamine diphosphate biosynthesis. Its function is as follows. Catalyzes the rearrangement of 1-deoxy-D-xylulose 5-phosphate (DXP) to produce the thiazole phosphate moiety of thiamine. Sulfur is provided by the thiocarboxylate moiety of the carrier protein ThiS. In vitro, sulfur can be provided by H(2)S. This chain is Thiazole synthase, found in Burkholderia lata (strain ATCC 17760 / DSM 23089 / LMG 22485 / NCIMB 9086 / R18194 / 383).